Here is a 284-residue protein sequence, read N- to C-terminus: Bifunctional protein FolD (284 aa).

Residues 164–166 (GRG), Thr-189, and Ile-230 each bind NADP(+).

This sequence belongs to the tetrahydrofolate dehydrogenase/cyclohydrolase family. In terms of assembly, homodimer.

It catalyses the reaction (6R)-5,10-methylene-5,6,7,8-tetrahydrofolate + NADP(+) = (6R)-5,10-methenyltetrahydrofolate + NADPH. It carries out the reaction (6R)-5,10-methenyltetrahydrofolate + H2O = (6R)-10-formyltetrahydrofolate + H(+). It functions in the pathway one-carbon metabolism; tetrahydrofolate interconversion. Its function is as follows. Catalyzes the oxidation of 5,10-methylenetetrahydrofolate to 5,10-methenyltetrahydrofolate and then the hydrolysis of 5,10-methenyltetrahydrofolate to 10-formyltetrahydrofolate. This is Bifunctional protein FolD from Pelotomaculum thermopropionicum (strain DSM 13744 / JCM 10971 / SI).